We begin with the raw amino-acid sequence, 134 residues long: STAG3-like protein 3 (134 aa).

The SCD domain maps to 10–95 (PKVTCRDVLP…GCFKDWMVSM (86 aa)).

This sequence belongs to the SCC3 family.

The protein localises to the nucleus. The polypeptide is STAG3-like protein 3 (STAG3L3) (Homo sapiens (Human)).